The primary structure comprises 105 residues: N(4)-acetylcytidine amidohydrolase (105 aa).

The ASCH domain occupies 7–93; it reads TFFERFEHDI…VIAEIYPGLE (87 aa). The active-site Proton acceptor is K21. Residue T24 is the Nucleophile of the active site. Residue E74 is the Proton donor of the active site.

It belongs to the N(4)-acetylcytidine amidohydrolase family.

It carries out the reaction N(4)-acetylcytidine + H2O = cytidine + acetate + H(+). The catalysed reaction is N(4)-acetyl-2'-deoxycytidine + H2O = 2'-deoxycytidine + acetate + H(+). It catalyses the reaction N(4)-acetylcytosine + H2O = cytosine + acetate + H(+). In terms of biological role, catalyzes the hydrolysis of N(4)-acetylcytidine (ac4C). The polypeptide is N(4)-acetylcytidine amidohydrolase (Shewanella baltica (strain OS195)).